The chain runs to 580 residues: MACTSNLSSLSKSWAVLDVPRGAPKATGLWLKRQFIFKTSRICMCMPTPTATQPIATPLIRDNESLLKYLRQPSVLPHEVDDSRKELLGRTRRQLRSTSEPLKAMNLIDTLQRLGLAYHFEDDMNAILSQLSSSGQSDGDLLTTALRFRLLRHNGHKIVQKFMDKNGKFKDSLKEDTMGLLSLYEASHLAANGEDILLEAMELTEAHLKQSLPSLPTQLARKVSSALELPRHRRMARLEARRYIQEYSEEIGHDPNLLELAKLDYNKVQSLHQMELTEISRWWKQLGLVDKLTFARDRPLECFLWTVGILPEPKYSNCRIELAKTIAILLVIDDIFDTHGTIDELVLFTNAIRRWDLEAMEGLPEYMRICYMALYNTTNEICYKILKENGWSVLPYLKATWIDMIEGFMLEASWYNNGQEPNMEEYVANGVTTAGAYMAMVHLFFLIGQGVTEENVKLLMKPYPKLFSCSGRILRLWDDLGTAKEEQERGDLASSIQLFMRENNITCDEEGRKRILQLIDNLWKDLNWELVSRDAMPLAIIKAAFNMARSSQVVYQHEEESYFSSVDNYVESLFFTPIIN.

The N-terminal 44 residues, 1–44, are a transit peptide targeting the chloroplast; that stretch reads MACTSNLSSLSKSWAVLDVPRGAPKATGLWLKRQFIFKTSRICM. Mg(2+) contacts are provided by Asp-333, Asp-337, Asp-478, Thr-482, and Glu-486. The short motif at 333–337 is the DDXXD motif element; sequence DDIFD.

This sequence belongs to the terpene synthase family. Tpsg subfamily. Monomer. It depends on Mg(2+) as a cofactor. Mn(2+) is required as a cofactor. In terms of tissue distribution, confined to flowers.

The protein localises to the plastid. It localises to the chloroplast. It participates in secondary metabolite biosynthesis; terpenoid biosynthesis. Its function is as follows. Monoterpene synthase (mono-TPS) involved in the biosynthesis of monoterpenes natural products, constituent of coffee beverage aroma. The sequence is that of Putative monoterpene synthase 8 from Coffea arabica (Arabian coffee).